The following is a 463-amino-acid chain: Vicilin (463 aa).

The signal sequence occupies residues 1–27 (MAATTLKDSFPLLTLLGIAFLASVCLS). The Cupin type-1 1 domain occupies 35–194 (PFVFESNRFQ…SFNTDYKEIE (160 aa)). Positions 235–257 (LNKNAKSSSKKSTSSESEPFNLR) are disordered. Over residues 238–252 (NAKSSSKKSTSSESE) the composition is skewed to low complexity. The 173-residue stretch at 254 to 426 (FNLRSREPIY…AFPGSAQEVD (173 aa)) folds into the Cupin type-1 2 domain.

The protein belongs to the 7S seed storage protein family.

It localises to the vacuole. The protein resides in the aleurone grain. In terms of biological role, seed storage protein. This Vicia faba (Broad bean) protein is Vicilin.